An 82-amino-acid chain; its full sequence is ATP synthase subunit c, chloroplastic (82 aa).

The next 2 helical transmembrane spans lie at 3–23 (PIVA…AAIG) and 57–77 (FAFM…LLFA).

The protein belongs to the ATPase C chain family. In terms of assembly, F-type ATPases have 2 components, F(1) - the catalytic core - and F(0) - the membrane proton channel. F(1) has five subunits: alpha(3), beta(3), gamma(1), delta(1), epsilon(1). F(0) has four main subunits: a(1), b(1), b'(1) and c(10-14). The alpha and beta chains form an alternating ring which encloses part of the gamma chain. F(1) is attached to F(0) by a central stalk formed by the gamma and epsilon chains, while a peripheral stalk is formed by the delta, b and b' chains.

Its subcellular location is the plastid. It localises to the chloroplast thylakoid membrane. In terms of biological role, f(1)F(0) ATP synthase produces ATP from ADP in the presence of a proton or sodium gradient. F-type ATPases consist of two structural domains, F(1) containing the extramembraneous catalytic core and F(0) containing the membrane proton channel, linked together by a central stalk and a peripheral stalk. During catalysis, ATP synthesis in the catalytic domain of F(1) is coupled via a rotary mechanism of the central stalk subunits to proton translocation. Functionally, key component of the F(0) channel; it plays a direct role in translocation across the membrane. A homomeric c-ring of between 10-14 subunits forms the central stalk rotor element with the F(1) delta and epsilon subunits. The protein is ATP synthase subunit c, chloroplastic of Tetradesmus obliquus (Green alga).